The following is a 510-amino-acid chain: Catalase (510 aa).

An N-terminal signal peptide occupies residues 1–26 (MPLLNWSRHMVCLTAAGLITVPTVYA). Residues His78 and Asn150 contribute to the active site. Tyr358 lines the heme pocket. Residues 386-400 (NQDGALNTGHTTSGV) are compositionally biased toward polar residues. A disordered region spans residues 386 to 412 (NQDGALNTGHTTSGVNYEPSRLEPRPA).

The protein belongs to the catalase family. It depends on heme as a cofactor.

The protein resides in the periplasm. The catalysed reaction is 2 H2O2 = O2 + 2 H2O. Its function is as follows. Decomposes hydrogen peroxide into water and oxygen; serves to protect cells from the toxic effects of hydrogen peroxide. This is Catalase (katB) from Pseudomonas syringae pv. syringae.